Consider the following 386-residue polypeptide: Cytochrome b (386 aa).

A run of 4 helical transmembrane segments spans residues 32–52 (LGSL…FLAM), 76–98 (WFIR…IHIG), 113–133 (VWNV…LGYC), and 179–199 (FFAF…MHFM). The heme b site is built by His82 and His96. 2 residues coordinate heme b: His183 and His197. His202 serves as a coordination point for a ubiquinone. 4 helical membrane passes run 225-245 (FIFK…LFVF), 289-309 (LLGV…PITD), 321-341 (FSKF…HLGE), and 348-368 (FVVM…VIVP).

The protein belongs to the cytochrome b family. In terms of assembly, fungal cytochrome b-c1 complex contains 10 subunits; 3 respiratory subunits, 2 core proteins and 5 low-molecular weight proteins. Cytochrome b-c1 complex is a homodimer. The cofactor is heme b.

Its subcellular location is the mitochondrion inner membrane. Functionally, component of the ubiquinol-cytochrome c reductase complex (complex III or cytochrome b-c1 complex) that is part of the mitochondrial respiratory chain. The b-c1 complex mediates electron transfer from ubiquinol to cytochrome c. Contributes to the generation of a proton gradient across the mitochondrial membrane that is then used for ATP synthesis. This chain is Cytochrome b (COB), found in Kluyveromyces lactis (strain ATCC 8585 / CBS 2359 / DSM 70799 / NBRC 1267 / NRRL Y-1140 / WM37) (Yeast).